The following is a 24-amino-acid chain: Heptapoietin A light chain (24 aa).

Heterodimer of a heavy and a light chain linked by disulfide bond(s).

Its function is as follows. HPTA is an acidic heparin-binding growth factor for hepatocytes. This is Heptapoietin A light chain from Oryctolagus cuniculus (Rabbit).